The sequence spans 621 residues: 1-deoxy-D-xylulose-5-phosphate synthase (621 aa).

Residues histidine 80 and 121–123 contribute to the thiamine diphosphate site; that span reads GHS. Aspartate 152 lines the Mg(2+) pocket. Residues 153-154, asparagine 181, tyrosine 288, and glutamate 370 contribute to the thiamine diphosphate site; that span reads GA. Asparagine 181 contacts Mg(2+).

It belongs to the transketolase family. DXPS subfamily. Homodimer. It depends on Mg(2+) as a cofactor. Thiamine diphosphate serves as cofactor.

The enzyme catalyses D-glyceraldehyde 3-phosphate + pyruvate + H(+) = 1-deoxy-D-xylulose 5-phosphate + CO2. The protein operates within metabolic intermediate biosynthesis; 1-deoxy-D-xylulose 5-phosphate biosynthesis; 1-deoxy-D-xylulose 5-phosphate from D-glyceraldehyde 3-phosphate and pyruvate: step 1/1. Its function is as follows. Catalyzes the acyloin condensation reaction between C atoms 2 and 3 of pyruvate and glyceraldehyde 3-phosphate to yield 1-deoxy-D-xylulose-5-phosphate (DXP). This chain is 1-deoxy-D-xylulose-5-phosphate synthase, found in Serratia proteamaculans (strain 568).